A 231-amino-acid chain; its full sequence is Large ribosomal subunit protein uL1 (231 aa).

The protein belongs to the universal ribosomal protein uL1 family. In terms of assembly, part of the 50S ribosomal subunit.

Binds directly to 23S rRNA. The L1 stalk is quite mobile in the ribosome, and is involved in E site tRNA release. Functionally, protein L1 is also a translational repressor protein, it controls the translation of the L11 operon by binding to its mRNA. The chain is Large ribosomal subunit protein uL1 from Stutzerimonas stutzeri (strain A1501) (Pseudomonas stutzeri).